Reading from the N-terminus, the 126-residue chain is Large ribosomal subunit protein bL12 (126 aa).

The protein belongs to the bacterial ribosomal protein bL12 family. As to quaternary structure, homodimer. Part of the ribosomal stalk of the 50S ribosomal subunit. Forms a multimeric L10(L12)X complex, where L10 forms an elongated spine to which 2 to 4 L12 dimers bind in a sequential fashion. Binds GTP-bound translation factors.

In terms of biological role, forms part of the ribosomal stalk which helps the ribosome interact with GTP-bound translation factors. Is thus essential for accurate translation. The chain is Large ribosomal subunit protein bL12 from Teredinibacter turnerae (strain ATCC 39867 / T7901).